Reading from the N-terminus, the 1536-residue chain is Alpha-2-macroglobulin (1536 aa).

The signal sequence occupies residues 1–23 (MGMKRLIFLVFLLISFSLFGGYA). The isoglutamyl cysteine thioester (Cys-Gln) cross-link spans 919–922 (CVEQ).

The protein belongs to the protease inhibitor I39 (alpha-2-macroglobulin) family. Bacterial alpha-2-macroglobulin subfamily.

Its function is as follows. Protects the bacterial cell from peptidases. The chain is Alpha-2-macroglobulin from Thermotoga maritima (strain ATCC 43589 / DSM 3109 / JCM 10099 / NBRC 100826 / MSB8).